An 829-amino-acid polypeptide reads, in one-letter code: Periplasmic nitrate reductase (829 aa).

A signal peptide (tat-type signal) is located at residues 1–30 (MKLSRRDFMKANAVAAAAAVAGVSAPTLAA). One can recognise a 4Fe-4S Mo/W bis-MGD-type domain in the interval 41 to 97 (ITWDKAPCRFCGTGCSVLVGSQDGRVVATQGDPDAPVNRGLNCIKGYFLSKIMYGQD). [4Fe-4S] cluster-binding residues include C48, C51, C55, and C83. Mo-bis(molybdopterin guanine dinucleotide)-binding positions include K85, Q152, N177, C181, 214–221 (WGSNMAEM), 245–249 (STFEH), 264–266 (QTD), M374, Q378, N484, 510–511 (SD), K533, D560, and 719–728 (TGRVLEHWHT). F795 is a substrate binding site. Mo-bis(molybdopterin guanine dinucleotide) contacts are provided by N803 and K820.

Belongs to the prokaryotic molybdopterin-containing oxidoreductase family. NasA/NapA/NarB subfamily. Component of the periplasmic nitrate reductase NapAB complex composed of NapA and NapB. It depends on [4Fe-4S] cluster as a cofactor. The cofactor is Mo-bis(molybdopterin guanine dinucleotide). Post-translationally, predicted to be exported by the Tat system. The position of the signal peptide cleavage has not been experimentally proven.

The protein resides in the periplasm. The catalysed reaction is 2 Fe(II)-[cytochrome] + nitrate + 2 H(+) = 2 Fe(III)-[cytochrome] + nitrite + H2O. Its function is as follows. Catalytic subunit of the periplasmic nitrate reductase complex NapAB. Receives electrons from NapB and catalyzes the reduction of nitrate to nitrite. The polypeptide is Periplasmic nitrate reductase (Aeromonas hydrophila subsp. hydrophila (strain ATCC 7966 / DSM 30187 / BCRC 13018 / CCUG 14551 / JCM 1027 / KCTC 2358 / NCIMB 9240 / NCTC 8049)).